The sequence spans 555 residues: Arginine--tRNA ligase (555 aa).

Residues 117–127 (ANPNGPLHVGH) carry the 'HIGH' region motif.

The protein belongs to the class-I aminoacyl-tRNA synthetase family.

The protein localises to the cytoplasm. It catalyses the reaction tRNA(Arg) + L-arginine + ATP = L-arginyl-tRNA(Arg) + AMP + diphosphate. The sequence is that of Arginine--tRNA ligase from Methanospirillum hungatei JF-1 (strain ATCC 27890 / DSM 864 / NBRC 100397 / JF-1).